The chain runs to 80 residues: Trefoil factor 3 (80 aa).

The signal sequence occupies residues 1–21; sequence MEARVLWLLALVLALGSSSLA. The P-type domain occupies 30-73; that stretch reads NLCAVPAKNRVDCGYPEISPEQCVNRGCCFDSSIPEVPWCFKPL. 3 cysteine pairs are disulfide-bonded: Cys-32/Cys-58, Cys-42/Cys-57, and Cys-52/Cys-69.

As to quaternary structure, monomer. Homodimer; disulfide-linked.

It is found in the secreted. The protein resides in the extracellular space. It localises to the extracellular matrix. Its subcellular location is the cytoplasm. Functionally, involved in the maintenance and repair of the intestinal mucosa. Promotes the mobility of epithelial cells in healing processes (motogen). This Felis catus (Cat) protein is Trefoil factor 3 (TFF3).